Here is a 368-residue protein sequence, read N- to C-terminus: Dihydroorotate dehydrogenase (quinone) (368 aa).

FMN-binding positions include 67–71 and threonine 91; that span reads AGFDK. Lysine 71 serves as a coordination point for substrate. Residue 116–120 coordinates substrate; that stretch reads NRMGF. Residues asparagine 146 and asparagine 179 each coordinate FMN. Asparagine 179 is a binding site for substrate. Serine 182 (nucleophile) is an active-site residue. Position 184 (asparagine 184) interacts with substrate. FMN contacts are provided by lysine 222 and threonine 250. 251-252 is a binding site for substrate; that stretch reads NT. FMN-binding positions include glycine 276, glycine 305, and 326 to 327; that span reads YS.

The protein belongs to the dihydroorotate dehydrogenase family. Type 2 subfamily. In terms of assembly, monomer. The cofactor is FMN.

It localises to the cell membrane. It catalyses the reaction (S)-dihydroorotate + a quinone = orotate + a quinol. It functions in the pathway pyrimidine metabolism; UMP biosynthesis via de novo pathway; orotate from (S)-dihydroorotate (quinone route): step 1/1. Its function is as follows. Catalyzes the conversion of dihydroorotate to orotate with quinone as electron acceptor. The chain is Dihydroorotate dehydrogenase (quinone) from Streptomyces coelicolor (strain ATCC BAA-471 / A3(2) / M145).